The following is a 433-amino-acid chain: 23S rRNA (uracil(1939)-C(5))-methyltransferase RlmD (433 aa).

Residues 1-53 enclose the TRAM domain; it reads MPVAVIESLDHEGRGVAHVDGKVVFVEGALAGEQVEYTVYRQRPSYDLAEATR. [4Fe-4S] cluster is bound by residues Cys-66, Cys-72, Cys-75, and Cys-154. Positions 263, 292, 297, 313, 341, and 362 each coordinate S-adenosyl-L-methionine. Cys-389 serves as the catalytic Nucleophile.

Belongs to the class I-like SAM-binding methyltransferase superfamily. RNA M5U methyltransferase family. RlmD subfamily.

The enzyme catalyses uridine(1939) in 23S rRNA + S-adenosyl-L-methionine = 5-methyluridine(1939) in 23S rRNA + S-adenosyl-L-homocysteine + H(+). Functionally, catalyzes the formation of 5-methyl-uridine at position 1939 (m5U1939) in 23S rRNA. The protein is 23S rRNA (uracil(1939)-C(5))-methyltransferase RlmD of Aromatoleum aromaticum (strain DSM 19018 / LMG 30748 / EbN1) (Azoarcus sp. (strain EbN1)).